A 222-amino-acid chain; its full sequence is UPF0128 protein PF1488 (222 aa).

Belongs to the UPF0128 family.

The chain is UPF0128 protein PF1488 from Pyrococcus furiosus (strain ATCC 43587 / DSM 3638 / JCM 8422 / Vc1).